We begin with the raw amino-acid sequence, 180 residues long: ATP synthase subunit delta (180 aa).

The protein belongs to the ATPase delta chain family. F-type ATPases have 2 components, F(1) - the catalytic core - and F(0) - the membrane proton channel. F(1) has five subunits: alpha(3), beta(3), gamma(1), delta(1), epsilon(1). F(0) has three main subunits: a(1), b(2) and c(10-14). The alpha and beta chains form an alternating ring which encloses part of the gamma chain. F(1) is attached to F(0) by a central stalk formed by the gamma and epsilon chains, while a peripheral stalk is formed by the delta and b chains.

Its subcellular location is the cell membrane. Functionally, f(1)F(0) ATP synthase produces ATP from ADP in the presence of a proton or sodium gradient. F-type ATPases consist of two structural domains, F(1) containing the extramembraneous catalytic core and F(0) containing the membrane proton channel, linked together by a central stalk and a peripheral stalk. During catalysis, ATP synthesis in the catalytic domain of F(1) is coupled via a rotary mechanism of the central stalk subunits to proton translocation. In terms of biological role, this protein is part of the stalk that links CF(0) to CF(1). It either transmits conformational changes from CF(0) to CF(1) or is implicated in proton conduction. The polypeptide is ATP synthase subunit delta (Enterococcus faecalis (strain ATCC 700802 / V583)).